The following is a 550-amino-acid chain: MNGSADAGPRPRKYVFITGGVVSSLGKGILTSSLGALLRARGYRVTAIKIDPYVNVDAGTMRPYEHGEVFVTADGAETDLDIGHYERFLDMDLSRGNNLTTGQVYLSVIQKERRGEYLSQTVQVIPHITDEIKERIRKVAEEQKAEIVVVEVGGTVGDIESLPFLEAIRQFRFDEGEGNTLYLHLTLVPYLETSEEFKTKPTQHSVATLRGVGIQPDILVLRSARPVPEEVRRKVALFTNVRPGHVFSSPTVEHLYEVPLLLEEQGLGRAVERALGLEAVIPNLAFWQEAVRVLKHPERTVKIAIAGKYVKMPDAYLSLLEALRHAGIKNRARVEVKWVDAESLEAADLDEAFRDVSGILVPGGFGVRGIEGKVRAAQYARERKIPYLGICLGLQIAVIEFARNVAGLKGANSTEFDPYTPHPVIDLMPEQLEVEGLGGTMRLGDWPMRIKPGTLLHRLYGKEEVLERHRHRYEVNPLYVDGLERAGLVVSATTPGMRGRGAGLVEAIELKDHPFFLGLQSHPEFKSRPMRPSPPFVGFVEAALAYQERA.

The segment at 1–277 (MNGSADAGPR…GRAVERALGL (277 aa)) is amidoligase domain. Ser23 provides a ligand contact to CTP. Ser23 lines the UTP pocket. Position 24 to 29 (24 to 29 (SLGKGI)) interacts with ATP. Tyr64 is an L-glutamine binding site. Residue Asp81 participates in ATP binding. Asp81 and Glu151 together coordinate Mg(2+). CTP contacts are provided by residues 158–160 (DIE), 198–203 (KTKPTQ), and Lys234. UTP contacts are provided by residues 198–203 (KTKPTQ) and Lys234. Positions 302-549 (KIAIAGKYVK…VEAALAYQER (248 aa)) constitute a Glutamine amidotransferase type-1 domain. Gly364 is a binding site for L-glutamine. Residue Cys391 is the Nucleophile; for glutamine hydrolysis of the active site. L-glutamine is bound by residues 392–395 (LGLQ), Glu415, and Arg472. Residues His522 and Glu524 contribute to the active site.

It belongs to the CTP synthase family. As to quaternary structure, homotetramer.

The catalysed reaction is UTP + L-glutamine + ATP + H2O = CTP + L-glutamate + ADP + phosphate + 2 H(+). The enzyme catalyses L-glutamine + H2O = L-glutamate + NH4(+). It carries out the reaction UTP + NH4(+) + ATP = CTP + ADP + phosphate + 2 H(+). It functions in the pathway pyrimidine metabolism; CTP biosynthesis via de novo pathway; CTP from UDP: step 2/2. Allosterically activated by GTP, when glutamine is the substrate; GTP has no effect on the reaction when ammonia is the substrate. The allosteric effector GTP functions by stabilizing the protein conformation that binds the tetrahedral intermediate(s) formed during glutamine hydrolysis. Inhibited by the product CTP, via allosteric rather than competitive inhibition. Its function is as follows. Catalyzes the ATP-dependent amination of UTP to CTP with either L-glutamine or ammonia as the source of nitrogen. Regulates intracellular CTP levels through interactions with the four ribonucleotide triphosphates. The sequence is that of CTP synthase from Thermus thermophilus (strain ATCC BAA-163 / DSM 7039 / HB27).